The following is a 103-amino-acid chain: Large ribosomal subunit protein bL28 (103 aa).

This sequence belongs to the bacterial ribosomal protein bL28 family.

This chain is Large ribosomal subunit protein bL28, found in Anaplasma phagocytophilum (strain HZ).